Reading from the N-terminus, the 156-residue chain is Acanthoscurrin-1 (156 aa).

The first 23 residues, 1-23, serve as a signal peptide directing secretion; sequence MAFRMKLVVCIVLLSTLAVMSSA. At Lys-155 the chain carries Lysine amide.

As to expression, expressed in hemocytes and secreted into the plasma following bacterial immune challenge.

The protein localises to the secreted. Functionally, antimicrobial protein. Strong activity against the Gram-negative bacterium E.coli SBS363 and yeast C.albicans. No detectable activity against the Gram-positive bacterium M.luteus. The protein is Acanthoscurrin-1 of Acanthoscurria gomesiana (Tarantula spider).